A 428-amino-acid polypeptide reads, in one-letter code: Serine--tRNA ligase (428 aa).

Thr-235–Glu-237 is a binding site for L-serine. Arg-266–Glu-268 provides a ligand contact to ATP. Glu-289 is a binding site for L-serine. Residue Glu-353–Ser-356 coordinates ATP. Ser-389 is an L-serine binding site.

It belongs to the class-II aminoacyl-tRNA synthetase family. Type-1 seryl-tRNA synthetase subfamily. As to quaternary structure, homodimer. The tRNA molecule binds across the dimer.

It localises to the cytoplasm. It catalyses the reaction tRNA(Ser) + L-serine + ATP = L-seryl-tRNA(Ser) + AMP + diphosphate + H(+). The enzyme catalyses tRNA(Sec) + L-serine + ATP = L-seryl-tRNA(Sec) + AMP + diphosphate + H(+). It participates in aminoacyl-tRNA biosynthesis; selenocysteinyl-tRNA(Sec) biosynthesis; L-seryl-tRNA(Sec) from L-serine and tRNA(Sec): step 1/1. Catalyzes the attachment of serine to tRNA(Ser). Is also able to aminoacylate tRNA(Sec) with serine, to form the misacylated tRNA L-seryl-tRNA(Sec), which will be further converted into selenocysteinyl-tRNA(Sec). This is Serine--tRNA ligase from Shewanella baltica (strain OS185).